A 353-amino-acid chain; its full sequence is Protein RecA (353 aa).

Residue 75–82 coordinates ATP; that stretch reads GPESSGKT.

It belongs to the RecA family.

The protein resides in the cytoplasm. In terms of biological role, can catalyze the hydrolysis of ATP in the presence of single-stranded DNA, the ATP-dependent uptake of single-stranded DNA by duplex DNA, and the ATP-dependent hybridization of homologous single-stranded DNAs. It interacts with LexA causing its activation and leading to its autocatalytic cleavage. The polypeptide is Protein RecA (Cupriavidus necator (Alcaligenes eutrophus)).